Reading from the N-terminus, the 676-residue chain is Basic proline-rich protein (676 aa).

A signal peptide spans 1 to 16; that stretch reads MLPILLSVALLALSSA. S28 and S30 each carry phosphoserine. Residues 29 to 676 are disordered; sequence NSAEKFLRPP…PRPPPGPPPQ (648 aa). Pro residues-rich tracts occupy residues 36-50, 71-424, and 442-676; these read RPPP…PPPE, GPAP…PPAD, and PPPA…PPPQ. The propeptide occupies 409–457; that stretch reads APPGARPPPPPPPPADEPQQGPAPSGDKPKKKPPPPAGPPPPGPPSPGP.

In terms of tissue distribution, acinar cells and secretory granules of the parotid gland.

It localises to the secreted. Functionally, the parotid hormone stimulates dentinal fluid transport in teeth. This Sus scrofa (Pig) protein is Basic proline-rich protein.